The sequence spans 415 residues: Sucrose permease (415 aa).

The Cytoplasmic portion of the chain corresponds to 1-16 (MALNIPFRNAYYRFAS). The chain crosses the membrane as a helical span at residues 17 to 37 (SYSFLFFISWSLWWSLYAIWL). Over 38-48 (KGHLGLTGTEL) the chain is Periplasmic. Residues 49 to 69 (GTLYSVNQFTSILFMMFYGIV) form a helical membrane-spanning segment. Residues 70-77 (QDKLGLKK) lie on the Cytoplasmic side of the membrane. The helical transmembrane segment at 78–98 (PLIWCMSFILVLTGPFMIYVY) threads the bilayer. The Periplasmic segment spans residues 99-107 (EPLLQSNFS). The chain crosses the membrane as a helical span at residues 108-128 (VGLILGALFFGLGYLAGCGLL). Topologically, residues 129–147 (DSFTEKMARNFHFEYGTAR) are cytoplasmic. Residues 148-167 (AWGSFGYAIGAFFAGIFFSI) traverse the membrane as a helical segment. Over 168–170 (SPH) the chain is Periplasmic. A helical membrane pass occupies residues 171–190 (INFWLVSLFGAVFMMINMRF). Residues 191-220 (KDKDHQCIAADAGGVKKEDFIAVFKDRNFW) lie on the Cytoplasmic side of the membrane. The chain crosses the membrane as a helical span at residues 221-241 (VFVIFIVGTWSFYNIFDQQLF). Over 242 to 260 (PVFYAGLFESHDVGTRLYG) the chain is Periplasmic. The chain crosses the membrane as a helical span at residues 261–281 (YLNSFQVVLEALCMAIIPFFV). Over 282 to 287 (NRVGPK) the chain is Cytoplasmic. A helical transmembrane segment spans residues 288–308 (NALLIGVVIMALRILSCALFV). Over 309 to 311 (NPW) the chain is Periplasmic. The chain crosses the membrane as a helical span at residues 312–332 (IISLVKLLHAIEVPLCVISVF). At 333–342 (KYSVANFDKR) the chain is on the cytoplasmic side. Residues 343–363 (LSSTIFLIGFQIASSLGIVLL) traverse the membrane as a helical segment. The Periplasmic portion of the chain corresponds to 364–377 (STPTGILFDHAGYQ). Residues 378-398 (TVFFAISGIVCLMLLFGIFFL) traverse the membrane as a helical segment. The Cytoplasmic segment spans residues 399–415 (SKKREQIVMETPVPSAI).

Belongs to the major facilitator superfamily. Oligosaccharide:H(+) symporter (OHS) (TC 2.A.1.5) family.

Its subcellular location is the cell inner membrane. It functions in the pathway glycan biosynthesis; sucrose metabolism. Functionally, responsible for transport of sucrose into the cell, with the concomitant import of a proton (symport system). Can also transport maltose, fructose or lactulose, but not glucose, lactose or melibiose. The substrate specificity is directed toward the fructofuranosyl moiety of the substrate. In Escherichia coli, this protein is Sucrose permease.